Consider the following 239-residue polypeptide: Segregation and condensation protein A (239 aa).

It belongs to the ScpA family. Component of a cohesin-like complex composed of ScpA, ScpB and the Smc homodimer, in which ScpA and ScpB bind to the head domain of Smc. The presence of the three proteins is required for the association of the complex with DNA.

The protein resides in the cytoplasm. In terms of biological role, participates in chromosomal partition during cell division. May act via the formation of a condensin-like complex containing Smc and ScpB that pull DNA away from mid-cell into both cell halves. The protein is Segregation and condensation protein A of Streptococcus suis (strain 98HAH33).